We begin with the raw amino-acid sequence, 303 residues long: Glycine--tRNA ligase alpha subunit (303 aa).

The protein belongs to the class-II aminoacyl-tRNA synthetase family. In terms of assembly, tetramer of two alpha and two beta subunits.

Its subcellular location is the cytoplasm. The catalysed reaction is tRNA(Gly) + glycine + ATP = glycyl-tRNA(Gly) + AMP + diphosphate. This chain is Glycine--tRNA ligase alpha subunit, found in Erwinia tasmaniensis (strain DSM 17950 / CFBP 7177 / CIP 109463 / NCPPB 4357 / Et1/99).